A 271-amino-acid polypeptide reads, in one-letter code: Protein FAM110D (271 aa).

3 disordered regions span residues 1–83, 116–145, and 186–245; these read MLLA…RPDS, PRDAAPSSPASTERPAASGGWAAPQDAPEA, and PQSW…PVSV. The span at 68–78 shows a compositional bias: basic residues; that stretch reads RPVRRGSGRRL. Residues 116–126 show a composition bias toward low complexity; sequence PRDAAPSSPAS. A compositionally biased stretch (gly residues) spans 220 to 231; sequence SPGGAGGGGGSE.

The protein belongs to the FAM110 family.

This Homo sapiens (Human) protein is Protein FAM110D (FAM110D).